The chain runs to 455 residues: tRNA modification GTPase MnmE (455 aa).

(6S)-5-formyl-5,6,7,8-tetrahydrofolate is bound by residues Arg-26, Glu-86, and Arg-125. The TrmE-type G domain occupies 222–376 (GLKTAIIGRP…VEEKINQIFF (155 aa)). Asn-232 lines the K(+) pocket. GTP-binding positions include 232-237 (NVGKSS), 251-257 (TDIAGTT), and 276-279 (DTAG). Mg(2+) is bound at residue Ser-236. K(+)-binding residues include Thr-251, Ile-253, and Thr-256. Position 257 (Thr-257) interacts with Mg(2+). Residue Lys-455 participates in (6S)-5-formyl-5,6,7,8-tetrahydrofolate binding.

This sequence belongs to the TRAFAC class TrmE-Era-EngA-EngB-Septin-like GTPase superfamily. TrmE GTPase family. Homodimer. Heterotetramer of two MnmE and two MnmG subunits. K(+) serves as cofactor.

It is found in the cytoplasm. Exhibits a very high intrinsic GTPase hydrolysis rate. Involved in the addition of a carboxymethylaminomethyl (cmnm) group at the wobble position (U34) of certain tRNAs, forming tRNA-cmnm(5)s(2)U34. This is tRNA modification GTPase MnmE from Lactococcus lactis subsp. lactis (strain IL1403) (Streptococcus lactis).